The following is a 335-amino-acid chain: Probable cytosolic iron-sulfur protein assembly protein Ciao1 (335 aa).

WD repeat units lie at residues 12 to 51 (GHKGRIWGVAWHPKGNTFASCGEDKAIRIWSLSGNSWSTK), 57 to 96 (GHKRTIREIRWSPCGQYLASASFDATTAIWSKSSGEFECN), 101 to 140 (GHENEVKSVSWSKSGGLLATCSRDKSVWIWEVAGDDEFEC), 146 to 185 (PHTQDVKRVVWHPTKEILASASYDNTIKMFAESALDSDWD), 192 to 231 (SHTSTVWSIDFDADGERLVSCSDDTTLKIWRAYHPGNDAG), 250 to 289 (QHSRAIYDVSWCKLTGLIATACGDDGIRIFKESSDSKRDE), and 301 to 335 (AHEQDVNSVEWNPVMAGQLISCSDDGTIKIWKMLD).

Belongs to the WD repeat CIA1 family.

In terms of biological role, essential component of the cytosolic iron-sulfur (Fe/S) protein assembly machinery. Required for the maturation of extramitochondrial Fe/S proteins. The polypeptide is Probable cytosolic iron-sulfur protein assembly protein Ciao1 (Drosophila willistoni (Fruit fly)).